Reading from the N-terminus, the 587-residue chain is Estrogen receptor (587 aa).

The interval 1–176 (MTLHTKTSGV…SMESTKETRY (176 aa)) is modulating (transactivation AF-1). 2 consecutive NR C4-type zinc fingers follow at residues 177–197 (CAVC…CEGC) and 213–237 (CPAT…LRKC). Residues 177–242 (CAVCNDYASG…RLRKCYEVGM (66 aa)) constitute a DNA-binding region (nuclear receptor). The segment at 243 to 302 (MKGGIRKDRRGGRVMKQKRQREEQDSRNGEASSTELRAPTLWASPLVVKHNKKNSPALSL) is hinge. A disordered region spans residues 248-277 (RKDRRGGRVMKQKRQREEQDSRNGEASSTE). Residues 249 to 261 (KDRRGGRVMKQKR) are compositionally biased toward basic residues. One can recognise an NR LBD domain in the interval 303–539 (TAEQMVSALL…DLLLEMLDAH (237 aa)). The transactivation AF-2 stretch occupies residues 303–587 (TAEQMVSALL…KEEENMQNTL (285 aa)).

It belongs to the nuclear hormone receptor family. NR3 subfamily. In terms of assembly, binds DNA as a homodimer. Can form a heterodimer with ER-beta.

The protein resides in the nucleus. The steroid hormones and their receptors are involved in the regulation of eukaryotic gene expression and affect cellular proliferation and differentiation in target tissues. This Taeniopygia guttata (Zebra finch) protein is Estrogen receptor (ESR1).